We begin with the raw amino-acid sequence, 364 residues long: MKALILVGGFGTRLRPLTLTLPKPLVEFGNRPMILHQVESLAAAGVTDIVLAVNYRPDVMVSALKKYEEQYNVKIEFSVETEPLGTAGPLKLAESILAKDDSPFFVLNSDVICDYPFQQLAEFHKRHGDEGTIVVTKVDEPSKYGVVVHKPNHPSRIDRFVEKPVEFVGNRINAGMYILNPSVLKRIELRPTSIEQETFPAIVRDGQLHSFDLEGFWMDVGQPKDFLTGTCLYLTSLTKRNSKLLAPNSEPYVYGGNVMVDPTAKIGKNCRIGPNVVIGPNVVIGDGVRLQRCVLMENSKVKDHAWIKSTIVGWNSSVGRWARLENVTVLGDDVTIADEVYVNGGSILPHKSIKQNIDVPAIIM.

It belongs to the transferase hexapeptide repeat family.

The protein resides in the cytoplasm. The enzyme catalyses alpha-D-mannose 1-phosphate + GTP + H(+) = GDP-alpha-D-mannose + diphosphate. It participates in nucleotide-sugar biosynthesis; GDP-alpha-D-mannose biosynthesis; GDP-alpha-D-mannose from alpha-D-mannose 1-phosphate (GTP route): step 1/1. Involved in cell wall synthesis where it is required for glycosylation. Involved in cell cycle progression through cell-size checkpoint. The sequence is that of Mannose-1-phosphate guanyltransferase (mpg1) from Emericella nidulans (strain FGSC A4 / ATCC 38163 / CBS 112.46 / NRRL 194 / M139) (Aspergillus nidulans).